We begin with the raw amino-acid sequence, 356 residues long: Histidinol-phosphate aminotransferase (356 aa).

Residue lysine 208 is modified to N6-(pyridoxal phosphate)lysine.

Belongs to the class-II pyridoxal-phosphate-dependent aminotransferase family. Histidinol-phosphate aminotransferase subfamily. In terms of assembly, homodimer. Pyridoxal 5'-phosphate serves as cofactor.

The catalysed reaction is L-histidinol phosphate + 2-oxoglutarate = 3-(imidazol-4-yl)-2-oxopropyl phosphate + L-glutamate. It functions in the pathway amino-acid biosynthesis; L-histidine biosynthesis; L-histidine from 5-phospho-alpha-D-ribose 1-diphosphate: step 7/9. This Lactococcus lactis subsp. cremoris (strain MG1363) protein is Histidinol-phosphate aminotransferase.